A 71-amino-acid polypeptide reads, in one-letter code: Small, acid-soluble spore protein I (71 aa).

This sequence belongs to the SspI family.

It is found in the spore core. The protein is Small, acid-soluble spore protein I of Bacillus velezensis (strain DSM 23117 / BGSC 10A6 / LMG 26770 / FZB42) (Bacillus amyloliquefaciens subsp. plantarum).